The sequence spans 259 residues: Putative carbamate hydrolase RutD (259 aa).

The protein belongs to the AB hydrolase superfamily. Hydrolase RutD family.

It carries out the reaction carbamate + 2 H(+) = NH4(+) + CO2. In terms of biological role, involved in pyrimidine catabolism. May facilitate the hydrolysis of carbamate, a reaction that can also occur spontaneously. The protein is Putative carbamate hydrolase RutD of Pseudomonas syringae pv. syringae (strain B728a).